We begin with the raw amino-acid sequence, 519 residues long: Molybdate transporter 1 (519 aa).

The next 7 membrane-spanning stretches (helical) occupy residues 98–118, 164–184, 370–390, 412–432, 436–456, 464–484, and 485–505; these read LLHAGLFVAGCVGLLGASQAI, LGTEGLVVGAVALAAMIATTL, AVALSVALLNGAGVWLGAMPC, ILLGCIKAALGLLFGGSLVVL, FPQPLLGALLTVSGIELASVV, GYTFALLTAVAILALDNTGTG, and FLVGLVGVAAVAAYEGAVAAA.

The protein belongs to the SLC26A/SulP transporter (TC 2.A.53) family.

It localises to the membrane. With respect to regulation, 60% inhibition by 20 uM tungstate or by lack of glucose in the medium, but no inhibition by sulfate. Its function is as follows. High affinity molybdate transporter. Acts through an energy-dependent process. This Chlamydomonas reinhardtii (Chlamydomonas smithii) protein is Molybdate transporter 1 (MOT1).